Consider the following 411-residue polypeptide: Diels-Alderase ffsF (411 aa).

A signal peptide spans 1–17 (MTQIKLLLLSLAITAQS).

This sequence belongs to the Diels-Alderase family.

Its pathway is mycotoxin biosynthesis. Its function is as follows. Diels-Alderase; part of the gene cluster that mediates the biosynthesis of the cytotoxic leucine-containing cytochalasans, including aspochalasin C, aspochalasin E, TMC-169, flavichalasine F, aspergillin PZ, aspochalasin M and flavichalasine G. The first step in the pathway is catalyzed by the hybrid PKS-NRPS ffsA that utilizes 8 units of malonyl-CoA to iteratively assemble the octaketide chain before addition of L-leucine by the C-terminal NRPS modules. Because ffsA lacks a designated enoylreductase (ER) domain, the required activity is provided the enoyl reductase fssC. The methyltransferase (MT) domain of ffsA catalyzes the alpha-methylation at C10 and C14 using S-adenosyl-L-methionine as the methyl-donating cosubstrate. Reduction by the hydrolyase ffsE, followed by dehydration and intra-molecular Diels-Alder cyclization by the Diels-Alderase ffsF then yield the required isoindolone-fused macrocycle. A number of oxidative steps catalyzed by the tailoring cytochrome P450 monooxygenase ffsD, the FAD-linked oxidoreductase ffsJ and the short-chain dehydrogenase/reductase ffsI, are further required to afford the final products. The chain is Diels-Alderase ffsF from Aspergillus flavipes.